We begin with the raw amino-acid sequence, 259 residues long: Ribonuclease PH (259 aa).

Phosphate contacts are provided by residues R88 and 126–128 (GTR).

Belongs to the RNase PH family. As to quaternary structure, homohexameric ring arranged as a trimer of dimers.

It catalyses the reaction tRNA(n+1) + phosphate = tRNA(n) + a ribonucleoside 5'-diphosphate. Phosphorolytic 3'-5' exoribonuclease that plays an important role in tRNA 3'-end maturation. Removes nucleotide residues following the 3'-CCA terminus of tRNAs; can also add nucleotides to the ends of RNA molecules by using nucleoside diphosphates as substrates, but this may not be physiologically important. Probably plays a role in initiation of 16S rRNA degradation (leading to ribosome degradation) during starvation. The polypeptide is Ribonuclease PH (Mycobacterium bovis (strain BCG / Pasteur 1173P2)).